Reading from the N-terminus, the 208-residue chain is Guanylate kinase (208 aa).

The Guanylate kinase-like domain maps to 4–185 (GNLYIISAPS…ALVDLEHILR (182 aa)). Residue 11-18 (APSGAGKS) participates in ATP binding.

It belongs to the guanylate kinase family.

The protein resides in the cytoplasm. The enzyme catalyses GMP + ATP = GDP + ADP. Its function is as follows. Essential for recycling GMP and indirectly, cGMP. The sequence is that of Guanylate kinase from Histophilus somni (strain 129Pt) (Haemophilus somnus).